The chain runs to 366 residues: Alcohol dehydrogenase (366 aa).

Residues Cys41, His62, Glu63, and Asp167 each coordinate Zn(2+).

The protein belongs to the zinc-containing alcohol dehydrogenase family. As to quaternary structure, homotetramer. Zn(2+) serves as cofactor.

The catalysed reaction is a primary alcohol + NAD(+) = an aldehyde + NADH + H(+). It carries out the reaction a secondary alcohol + NAD(+) = a ketone + NADH + H(+). The enzyme catalyses (R,R)-butane-2,3-diol + NAD(+) = (R)-acetoin + NADH + H(+). It catalyses the reaction an aldehyde + NAD(+) + H2O = a carboxylate + NADH + 2 H(+). Functionally, multifunctional alcohol dehydrogenase exhibiting NAD(+)-dependent dehydrogenase activities for 2,3-butanediol, ethanol and acetaldehyde, and reductase activities for acetoin (NADH-dependent), and diacetyl and acetaldehyde (independently of whether NADH or NADPH is the reductant). The rate of oxidation of 2,3-butanediol is much higher than for the oxidation of ethanol. Has acetaldehyde dehydrogenase activity leading to acetate formation. May function in the release of excess reducing power in the absence of exogenous hydrogen acceptors such as oxygen. The polypeptide is Alcohol dehydrogenase (adh) (Cupriavidus necator (Alcaligenes eutrophus)).